A 385-amino-acid polypeptide reads, in one-letter code: Zinc finger protein B385R (385 aa).

2 C2H2-type zinc fingers span residues 166–190 (LQCP…FYNH) and 168–190 (CPNC…FYNH).

It belongs to the asfivirus B385R family.

The polypeptide is Zinc finger protein B385R (African swine fever virus (isolate Tick/Malawi/Lil 20-1/1983) (ASFV)).